The chain runs to 286 residues: MHTLTLPAPAKLNLWLHIIGRRADGYHELETVFQFLDHGDELSFALREDGVIRLHTEIEAVPHDSNLIVRAARKLQEQSGTALGADIWLTKVLPMGGGIGGGSSDAATTLLALAHLWQLDWDEDRLAALGLSLGADVPVFVRGHAAFAQGVGEQLTPVDPIEPWYVVLVPQVSVSTVEIFSHPQLTRDSLPLKMRPVPEGNSRNDCQPVVEQNYPEVRNALNSLGKFTEARLTGTGSCVFGAFPSKAEADKVLALLSATQTGFVAKGSNISMLHRKLQSLVKKSSA.

Residue Lys-11 is part of the active site. 94–104 is an ATP binding site; that stretch reads PMGGGIGGGSS. Asp-136 is an active-site residue.

Belongs to the GHMP kinase family. IspE subfamily.

The enzyme catalyses 4-CDP-2-C-methyl-D-erythritol + ATP = 4-CDP-2-C-methyl-D-erythritol 2-phosphate + ADP + H(+). It participates in isoprenoid biosynthesis; isopentenyl diphosphate biosynthesis via DXP pathway; isopentenyl diphosphate from 1-deoxy-D-xylulose 5-phosphate: step 3/6. Its function is as follows. Catalyzes the phosphorylation of the position 2 hydroxy group of 4-diphosphocytidyl-2C-methyl-D-erythritol. The sequence is that of 4-diphosphocytidyl-2-C-methyl-D-erythritol kinase from Pseudomonas putida (strain GB-1).